A 101-amino-acid polypeptide reads, in one-letter code: UPF0235 protein MmarC7_0309 (101 aa).

The protein belongs to the UPF0235 family.

In Methanococcus maripaludis (strain C7 / ATCC BAA-1331), this protein is UPF0235 protein MmarC7_0309.